The primary structure comprises 599 residues: MVTLFCAVVGVAGSTFPVDINENKSVGHLKKAIKEEKMYQFPADELQLFLAKAGGNAWLSSLTEDVKKLKKGEKTALVKSLTQEEKELQGEDPISECLEGMDPPKVKQIHVLVALPPGTSSAPISDGTDLWLSRFQHSEVAKLTLLPTRGDLNEFIGQPLPVKIGLPQSVFQAWSSPLILGQLLRDKLFELNDISPCEFLKDSVFSAAFLYPQVDGDATESAFHYFWDSIIRVVLGFVFRRAYVNRDSSRKSSSGLKRPDFLFALDHICVFRGEEKEPRTSITVPREELSKKLVWSYGGVPYVFGYAASGFELELFAIYQDVTGNVKTHLIGGFNLQHAPERFRLVLALLNLCLLFPAIVQNCPASAGTEFMDIHRANGVKVRLSPIFVDKIFHTQEEYRRVKQIYDSLKAYGVPCADAVVTVDSDQLRLTLKPRGIEMKPCSLSELFVALGNVLEALVVLHRNGWMHRDIRWSNVIKHIDRVEWFLIDFADAAQSPQKYPSGDHLTHDEHASDIFMEGGSHTTAVDLWAVGYLVKTSKIEREWTAEPERALFLDRLMNPDPSARPTADEALQLLSRFEREAAEQESQGKGVRKKHRRA.

An N-terminal signal peptide occupies residues 1–17; sequence MVTLFCAVVGVAGSTFP. Residues 18–52 form an LQLFLAK domain region; it reads VDINENKSVGHLKKAIKEEKMYQFPADELQLFLAK. Asparagine 23 carries an N-linked (GlcNAc...) asparagine glycan. The DWL domain stretch occupies residues 53 to 109; that stretch reads AGGNAWLSSLTEDVKKLKKGEKTALVKSLTQEEKELQGEDPISECLEGMDPPKVKQI. The HVLVXXP motif motif lies at 110-116; that stretch reads HVLVALP. A C-terminal D2 effector domain region spans residues 117 to 590; sequence PGTSSAPISD…EAAEQESQGK (474 aa). 3 positions are modified to phosphoserine: serine 249, serine 281, and serine 385. The Protein kinase domain occupies 289–590; it reads LSKKLVWSYG…EAAEQESQGK (302 aa). The active-site Proton acceptor is aspartate 470. Phosphoserine occurs at positions 474 and 587. The disordered stretch occupies residues 577–599; it reads RFEREAAEQESQGKGVRKKHRRA. Positions 590 to 599 match the Host nuclear localization signal motif; it reads KGVRKKHRRA.

In the N-terminal section; belongs to the Crinkler effector family. It in the C-terminal section; belongs to the protein kinase superfamily. In terms of assembly, dimerizes in host plants. Post-translationally, autophosphorylated at Ser-249, Ser-281, Ser-385, Ser-474 and Ser-587. Additional serines or threonines are also targeted for phosphorylation.

The protein resides in the secreted. It is found in the host nucleus. It catalyses the reaction L-seryl-[protein] + ATP = O-phospho-L-seryl-[protein] + ADP + H(+). The catalysed reaction is L-threonyl-[protein] + ATP = O-phospho-L-threonyl-[protein] + ADP + H(+). Secreted effector that induces cell death when expressed in host plants. Acts as a kinase and is able to autophosphorylate, however its cell death inducing ability is not a direct result of its kinase activity, but rather a consequence of the phosphorylated state of the five identified serine residues in the CRN8 protein. The polypeptide is Crinkler effector protein 8 (Phytophthora infestans (Potato late blight agent)).